Consider the following 403-residue polypeptide: Phosphopentomutase (403 aa).

Residues D13, D298, H303, D339, H340, and H351 each coordinate Mn(2+).

This sequence belongs to the phosphopentomutase family. It depends on Mn(2+) as a cofactor.

It localises to the cytoplasm. The catalysed reaction is 2-deoxy-alpha-D-ribose 1-phosphate = 2-deoxy-D-ribose 5-phosphate. It catalyses the reaction alpha-D-ribose 1-phosphate = D-ribose 5-phosphate. Its pathway is carbohydrate degradation; 2-deoxy-D-ribose 1-phosphate degradation; D-glyceraldehyde 3-phosphate and acetaldehyde from 2-deoxy-alpha-D-ribose 1-phosphate: step 1/2. Functionally, isomerase that catalyzes the conversion of deoxy-ribose 1-phosphate (dRib-1-P) and ribose 1-phosphate (Rib-1-P) to deoxy-ribose 5-phosphate (dRib-5-P) and ribose 5-phosphate (Rib-5-P), respectively. This Streptococcus uberis (strain ATCC BAA-854 / 0140J) protein is Phosphopentomutase.